A 1641-amino-acid chain; its full sequence is Histone-lysine N-methyltransferase SETD1 (1641 aa).

The segment at 1-23 is disordered; sequence MQDVRNINLVNNSSNSHDSSLAN. Residues 8–23 are compositionally biased toward low complexity; that stretch reads NLVNNSSNSHDSSLAN. In terms of domain architecture, RRM spans 101–179; sequence VEVTIVNLND…KILDVFCDPF (79 aa). 6 disordered regions span residues 236-384, 537-596, 831-915, 930-949, 1119-1155, and 1205-1226; these read YTTQ…IDQR, APPF…SDEE, RIRK…SSSS, KART…NLNQ, QEKR…RKTA, and NSKG…SSQA. Residues 244–284 show a composition bias toward basic and acidic residues; it reads IPNRSRDRNWNRDKERERDRHFKERSRHSSERSYDRDRGMR. Basic residues predominate over residues 291 to 300; the sequence is IRRRRTFYRR. 2 stretches are compositionally biased toward basic and acidic residues: residues 308–341 and 349–384; these read EDSR…ESFR and KGRD…IDQR. The span at 556-568 shows a compositional bias: low complexity; that stretch reads EVFSDVNSDSNNS. 2 stretches are compositionally biased toward basic and acidic residues: residues 569–579 and 844–867; these read ENKKRSCEKNN and NFLE…KEDS. Residues 904 to 915 show a composition bias toward low complexity; the sequence is SASSFFSSSSSS. 2 stretches are compositionally biased toward basic and acidic residues: residues 930 to 939 and 1119 to 1128; these read KARTSEEDSP and QEKRIEKSLD. Positions 1091 to 1132 form a coiled coil; it reads SEEEKEYQERRKRNTEYMAQMEREFLEEQEKRIEKSLDKNLQ. Polar residues-rich tracts occupy residues 1129-1145 and 1205-1217; these read KNLQ…NSPR and NSKG…QSPV. Residues 1473–1478 carry the RxxxRR motif motif; sequence RSNQRR. An SET domain is found at 1502–1619; sequence KQLKFAKSAI…INEEITYDYK (118 aa). Tyr1618 contacts S-adenosyl-L-methionine. The region spanning 1625–1641 is the Post-SET domain; sequence EKIPCLCGAQGCRGTLN.

It belongs to the class V-like SAM-binding methyltransferase superfamily. In terms of assembly, component of the Set1C/COMPASS complex, composed at least of the catalytic subunit Set1, wds/WDR5, Wdr82, Rbbp5, ash2, Cfp1/CXXC1, hcf and Dpy-30L1.

The protein localises to the nucleus. It is found in the chromosome. It carries out the reaction L-lysyl(4)-[histone H3] + 3 S-adenosyl-L-methionine = N(6),N(6),N(6)-trimethyl-L-lysyl(4)-[histone H3] + 3 S-adenosyl-L-homocysteine + 3 H(+). The catalysed reaction is N(6)-methyl-L-lysyl(4)-[histone H3] + S-adenosyl-L-methionine = N(6),N(6)-dimethyl-L-lysyl(4)-[histone H3] + S-adenosyl-L-homocysteine + H(+). It catalyses the reaction N(6),N(6)-dimethyl-L-lysyl(4)-[histone H3] + S-adenosyl-L-methionine = N(6),N(6),N(6)-trimethyl-L-lysyl(4)-[histone H3] + S-adenosyl-L-homocysteine + H(+). Functionally, catalytic component of the COMPASS (Set1C) complex that specifically mono-, di- and trimethylates histone H3 to form H3K4me1/2/3. Binds RNAs which might negatively affect its histone methyltransferase activity. COMPASS recognizes ubiquitinated H2B on one face of the nucleosome which stimulates the methylation of H3 on the opposing face. Set1-dependent trimethylation regulates chromatin changes at active promoters that ensure optimal RNA polymerase II release into productive elongation, thereby contributing to optimal transcription. This chain is Histone-lysine N-methyltransferase SETD1, found in Drosophila melanogaster (Fruit fly).